Reading from the N-terminus, the 236-residue chain is Methylosome subunit pICln (236 aa).

The tract at residues 1 to 20 (MSFLKSFPPPGPTEGLRHQQ) is disordered. At S2 the chain carries N-acetylserine. Residues S101, S143, S192, S194, S197, and S209 each carry the phosphoserine modification. Position 222 is a phosphothreonine (T222).

Belongs to the pICln (TC 1.A.47) family. Component of the methylosome, a 20S complex containing at least PRMT5/SKB1, WDR77/MEP50 and CLNS1A/pICln. May mediate SNRPD1 and SNRPD3 methylation. Forms a 6S pICln-Sm complex composed of CLNS1A/pICln, SNRPD1, SNRPD2, SNRPE, SNRPF and SNRPG; ring-like structure where CLNS1A/pICln mimics additional Sm proteins and which is unable to assemble into the core snRNP. Interacts with LSM10 and LSM11. Widely distributed but expressed more abundantly in nonpigmented ciliary epithelial cells than in pigmented ones.

The protein localises to the cytoplasm. It is found in the cytosol. The protein resides in the nucleus. It localises to the cytoskeleton. In terms of biological role, involved in both the assembly of spliceosomal snRNPs and the methylation of Sm proteins. Chaperone that regulates the assembly of spliceosomal U1, U2, U4 and U5 small nuclear ribonucleoproteins (snRNPs), the building blocks of the spliceosome, and thereby plays an important role in the splicing of cellular pre-mRNAs. Most spliceosomal snRNPs contain a common set of Sm proteins SNRPB, SNRPD1, SNRPD2, SNRPD3, SNRPE, SNRPF and SNRPG that assemble in a heptameric protein ring on the Sm site of the small nuclear RNA to form the core snRNP (Sm core). In the cytosol, the Sm proteins SNRPD1, SNRPD2, SNRPE, SNRPF and SNRPG are trapped in an inactive 6S pICln-Sm complex by the chaperone CLNS1A that controls the assembly of the core snRNP. Dissociation by the SMN complex of CLNS1A from the trapped Sm proteins and their transfer to an SMN-Sm complex triggers the assembly of core snRNPs and their transport to the nucleus. The chain is Methylosome subunit pICln (CLNS1A) from Oryctolagus cuniculus (Rabbit).